Consider the following 522-residue polypeptide: Maturase K (522 aa).

The protein belongs to the intron maturase 2 family. MatK subfamily.

It is found in the plastid. It localises to the chloroplast. Usually encoded in the trnK tRNA gene intron. Probably assists in splicing its own and other chloroplast group II introns. This Dianella ensifolia (Flax lily) protein is Maturase K.